The primary structure comprises 129 residues: UPF0225 protein XOO0258 (129 aa).

Belongs to the UPF0225 family.

This Xanthomonas oryzae pv. oryzae (strain MAFF 311018) protein is UPF0225 protein XOO0258.